The primary structure comprises 166 residues: RNA pyrophosphohydrolase (166 aa).

The 144-residue stretch at 6–149 folds into the Nudix hydrolase domain; sequence GFRPNVGIIL…KRDVYRKAMM (144 aa). The short motif at 38 to 59 is the Nudix box element; it reads GGIHFGETPEQALYRELREEVG.

It belongs to the Nudix hydrolase family. RppH subfamily. Requires a divalent metal cation as cofactor.

Accelerates the degradation of transcripts by removing pyrophosphate from the 5'-end of triphosphorylated RNA, leading to a more labile monophosphorylated state that can stimulate subsequent ribonuclease cleavage. This Acinetobacter baylyi (strain ATCC 33305 / BD413 / ADP1) protein is RNA pyrophosphohydrolase.